Consider the following 392-residue polypeptide: Formate-dependent phosphoribosylglycinamide formyltransferase (392 aa).

N(1)-(5-phospho-beta-D-ribosyl)glycinamide is bound by residues 22-23 (EL) and Glu-82. Residues Arg-114, Lys-155, 160–165 (SSGKGQ), 195–198 (EGVV), and Glu-203 contribute to the ATP site. In terms of domain architecture, ATP-grasp spans 119–308 (RLAAEELQLP…EFALHVRAFL (190 aa)). Mg(2+) contacts are provided by Glu-267 and Glu-279. N(1)-(5-phospho-beta-D-ribosyl)glycinamide contacts are provided by residues Asp-286, Lys-355, and 362-363 (RR).

It belongs to the PurK/PurT family. Homodimer.

It carries out the reaction N(1)-(5-phospho-beta-D-ribosyl)glycinamide + formate + ATP = N(2)-formyl-N(1)-(5-phospho-beta-D-ribosyl)glycinamide + ADP + phosphate + H(+). Its pathway is purine metabolism; IMP biosynthesis via de novo pathway; N(2)-formyl-N(1)-(5-phospho-D-ribosyl)glycinamide from N(1)-(5-phospho-D-ribosyl)glycinamide (formate route): step 1/1. Functionally, involved in the de novo purine biosynthesis. Catalyzes the transfer of formate to 5-phospho-ribosyl-glycinamide (GAR), producing 5-phospho-ribosyl-N-formylglycinamide (FGAR). Formate is provided by PurU via hydrolysis of 10-formyl-tetrahydrofolate. The chain is Formate-dependent phosphoribosylglycinamide formyltransferase from Shigella boydii serotype 18 (strain CDC 3083-94 / BS512).